A 326-amino-acid chain; its full sequence is Ketol-acid reductoisomerase (NADP(+)) (326 aa).

The region spanning 2-182 is the KARI N-terminal Rossmann domain; it reads AKIYGDEDAS…GFTRAGVIKT (181 aa). Residues 25–28, Arg-48, Ser-53, and 83–86 each bind NADP(+); these read YGSQ and DEVQ. His-108 is an active-site residue. Gly-134 contacts NADP(+). The region spanning 183-325 is the KARI C-terminal knotted domain; that stretch reads TFREEVETDL…ERLRKMMGFE (143 aa). The Mg(2+) site is built by Asp-191, Glu-195, Glu-227, and Glu-231. Ser-252 contacts substrate.

Belongs to the ketol-acid reductoisomerase family. Requires Mg(2+) as cofactor.

The enzyme catalyses (2R)-2,3-dihydroxy-3-methylbutanoate + NADP(+) = (2S)-2-acetolactate + NADPH + H(+). It catalyses the reaction (2R,3R)-2,3-dihydroxy-3-methylpentanoate + NADP(+) = (S)-2-ethyl-2-hydroxy-3-oxobutanoate + NADPH + H(+). It participates in amino-acid biosynthesis; L-isoleucine biosynthesis; L-isoleucine from 2-oxobutanoate: step 2/4. The protein operates within amino-acid biosynthesis; L-valine biosynthesis; L-valine from pyruvate: step 2/4. Functionally, involved in the biosynthesis of branched-chain amino acids (BCAA). Catalyzes an alkyl-migration followed by a ketol-acid reduction of (S)-2-acetolactate (S2AL) to yield (R)-2,3-dihydroxy-isovalerate. In the isomerase reaction, S2AL is rearranged via a Mg-dependent methyl migration to produce 3-hydroxy-3-methyl-2-ketobutyrate (HMKB). In the reductase reaction, this 2-ketoacid undergoes a metal-dependent reduction by NADPH to yield (R)-2,3-dihydroxy-isovalerate. The sequence is that of Ketol-acid reductoisomerase (NADP(+)) from Methanopyrus kandleri (strain AV19 / DSM 6324 / JCM 9639 / NBRC 100938).